We begin with the raw amino-acid sequence, 339 residues long: Putative P2Y purinoceptor 10 (339 aa).

The Extracellular portion of the chain corresponds to 1–39 (MANLDKYTETFKMGSNSTSTAEIYCNVTNVKFQYSLYAT). 2 N-linked (GlcNAc...) asparagine glycosylation sites follow: asparagine 16 and asparagine 26. Residues 40-60 (TYILIFIPGLLANSAALWVLC) form a helical membrane-spanning segment. The Cytoplasmic segment spans residues 61–68 (RFISKKNK). A helical membrane pass occupies residues 69–89 (AIIFMINLSVADLAHVLSLPL). The Extracellular segment spans residues 90 to 103 (RIYYYISHHWPFQR). The helical transmembrane segment at 104 to 124 (ALCLLCFYLKYLNMYASICFL) threads the bilayer. Cysteine 106 and cysteine 181 are joined by a disulfide. Topologically, residues 125–149 (TCISLQRCFFLLKPFRARDWKRRYD) are cytoplasmic. A helical transmembrane segment spans residues 150 to 170 (VGISAAIWIVVGTACLPFPIL). Topologically, residues 171 to 193 (RSTDLNNNKSCFADLGYKQMNAV) are extracellular. An N-linked (GlcNAc...) asparagine glycan is attached at asparagine 178. A helical transmembrane segment spans residues 194 to 214 (ALVGMITVAELAGFVIPVIII). At 215-244 (AWCTWKTTISLRQPPMAFQGISERQKALRM) the chain is on the cytoplasmic side. A helical transmembrane segment spans residues 245–265 (VFMCAAVFFICFTPYHINFIF). The Extracellular segment spans residues 266-288 (YTMVKETIISSCPVVRIALYFHP). Residues 289-309 (FCLCLASLCCLLDPILYYFMA) traverse the membrane as a helical segment. Residues 310–339 (SEFRDQLSRHGSSVTRSRLMSKESGSSMIG) lie on the Cytoplasmic side of the membrane.

The protein belongs to the G-protein coupled receptor 1 family. In terms of tissue distribution, weakly expressed in blood leukocytes.

The protein localises to the cell membrane. In terms of biological role, putative receptor for purines coupled to G-proteins. The chain is Putative P2Y purinoceptor 10 (P2RY10) from Homo sapiens (Human).